Reading from the N-terminus, the 334-residue chain is Tryptophan--tRNA ligase (334 aa).

ATP contacts are provided by residues 12-14 (QPS) and 20-21 (GN). Positions 13 to 21 (PSGIPTLGN) match the 'HIGH' region motif. Residue Asp136 coordinates L-tryptophan. Residues 148 to 150 (GKD), Ile187, and 196 to 200 (KMSKS) contribute to the ATP site. The 'KMSKS' region signature appears at 196-200 (KMSKS).

Belongs to the class-I aminoacyl-tRNA synthetase family. As to quaternary structure, homodimer.

The protein localises to the cytoplasm. It carries out the reaction tRNA(Trp) + L-tryptophan + ATP = L-tryptophyl-tRNA(Trp) + AMP + diphosphate + H(+). Functionally, catalyzes the attachment of tryptophan to tRNA(Trp). The chain is Tryptophan--tRNA ligase from Wigglesworthia glossinidia brevipalpis.